Consider the following 336-residue polypeptide: Large ribosomal subunit protein uL1 (336 aa).

Residues 1-245 (MANQKKVTNK…VKKTAKGKVI (245 aa)) form a large ribosomal subunit protein uL1 region. The segment at 246 to 336 (ADDSAKGENK…DVKKAKTSKK (91 aa)) is unknown. The segment at 267 to 336 (AQKKKPSKHP…DVKKAKTSKK (70 aa)) is disordered. The span at 286 to 305 (KKKKVKKILKKAKPAKKAAV) shows a compositional bias: basic residues. Residues 306–315 (AKKPVVVNKK) are compositionally biased toward low complexity.

This sequence belongs to the universal ribosomal protein uL1 family. In terms of assembly, part of the 50S ribosomal subunit.

In terms of biological role, binds directly to 23S rRNA. The L1 stalk is quite mobile in the ribosome, and is involved in E site tRNA release. Functionally, protein L1 is also a translational repressor protein, it controls the translation of the L11 operon by binding to its mRNA. This is Large ribosomal subunit protein uL1 from Malacoplasma penetrans (strain HF-2) (Mycoplasma penetrans).